A 103-amino-acid chain; its full sequence is Large ribosomal subunit protein uL23 (103 aa).

Belongs to the universal ribosomal protein uL23 family. Part of the 50S ribosomal subunit. Contacts protein L29, and trigger factor when it is bound to the ribosome.

Its function is as follows. One of the early assembly proteins it binds 23S rRNA. One of the proteins that surrounds the polypeptide exit tunnel on the outside of the ribosome. Forms the main docking site for trigger factor binding to the ribosome. This is Large ribosomal subunit protein uL23 from Chlorobium phaeovibrioides (strain DSM 265 / 1930) (Prosthecochloris vibrioformis (strain DSM 265)).